Here is a 57-residue protein sequence, read N- to C-terminus: Potassium channel toxin alpha-KTx 8.7 (57 aa).

An N-terminal signal peptide occupies residues 1 to 28 (MSRLYAIILIALVFNVIMTIMPDMKVEA). Intrachain disulfides connect Cys-31–Cys-47, Cys-34–Cys-52, and Cys-38–Cys-54.

Expressed by the venom gland.

The protein localises to the secreted. Functionally, inhibits voltage-gated potassium channel rKv1.1/KCNA1 at nanomolar ranges (IC(50)=8.5 nM). This Mesobuthus eupeus (Lesser Asian scorpion) protein is Potassium channel toxin alpha-KTx 8.7.